The sequence spans 917 residues: Protein translocase subunit SecA (917 aa).

ATP-binding positions include Gln-87, 105 to 109, and Asp-516; that span reads GEGKT. Residues Cys-901, Cys-903, Cys-912, and His-913 each contribute to the Zn(2+) site.

This sequence belongs to the SecA family. As to quaternary structure, monomer and homodimer. Part of the essential Sec protein translocation apparatus which comprises SecA, SecYEG and auxiliary proteins SecDF-YajC and YidC. Requires Zn(2+) as cofactor.

Its subcellular location is the cell inner membrane. The protein localises to the cytoplasm. It catalyses the reaction ATP + H2O + cellular proteinSide 1 = ADP + phosphate + cellular proteinSide 2.. In terms of biological role, part of the Sec protein translocase complex. Interacts with the SecYEG preprotein conducting channel. Has a central role in coupling the hydrolysis of ATP to the transfer of proteins into and across the cell membrane, serving both as a receptor for the preprotein-SecB complex and as an ATP-driven molecular motor driving the stepwise translocation of polypeptide chains across the membrane. This is Protein translocase subunit SecA from Acidovorax ebreus (strain TPSY) (Diaphorobacter sp. (strain TPSY)).